Here is a 490-residue protein sequence, read N- to C-terminus: Histone-lysine N-methyltransferase SMYD1 (490 aa).

Positions 7-253 (ENVEVFTAEG…EGEELTVSYI (247 aa)) constitute an SET domain. S-adenosyl-L-methionine is bound at residue 17–19 (KGR). Zn(2+)-binding residues include cysteine 52, cysteine 55, cysteine 65, cysteine 68, cysteine 74, cysteine 78, histidine 86, and cysteine 90. The MYND-type zinc-finger motif lies at 52–90 (CHTCFKRQEKLHRCGQCKFAHYCDRTCQKDAWLNHKNEC). Residues histidine 135 and 205–206 (NH) each bind S-adenosyl-L-methionine. Cysteine 208 contributes to the Zn(2+) binding site. An S-adenosyl-L-methionine-binding site is contributed by 270–272 (YYF). Zn(2+) contacts are provided by cysteine 274, cysteine 276, and cysteine 279.

Belongs to the class V-like SAM-binding methyltransferase superfamily. As to quaternary structure, interacts with HDAC1, HDAC2 and HDAC3. Interacts (via MYND-type zinc finger) with NACA isoform skNAC. As to expression, expression seems mostly restricted to heart and skeletal muscle.

The protein resides in the cytoplasm. It localises to the nucleus. The enzyme catalyses L-lysyl(4)-[histone H3] + 3 S-adenosyl-L-methionine = N(6),N(6),N(6)-trimethyl-L-lysyl(4)-[histone H3] + 3 S-adenosyl-L-homocysteine + 3 H(+). Functionally, methylates histone H3 at 'Lys-4' (H3K4me), seems able to perform both mono-, di-, and trimethylation. Acts as a transcriptional repressor. Essential for cardiomyocyte differentiation and cardiac morphogenesis. The polypeptide is Histone-lysine N-methyltransferase SMYD1 (SMYD1) (Homo sapiens (Human)).